A 231-amino-acid chain; its full sequence is Potassium/proton antiporter CemA (231 aa).

3 helical membrane passes run 9–29 (FIPL…SFLF), 116–136 (IICF…LIIL), and 191–211 (IISG…KYWI).

It belongs to the CemA family.

Its subcellular location is the plastid. It localises to the chloroplast inner membrane. It catalyses the reaction K(+)(in) + H(+)(out) = K(+)(out) + H(+)(in). Functionally, contributes to K(+)/H(+) antiport activity by supporting proton efflux to control proton extrusion and homeostasis in chloroplasts in a light-dependent manner to modulate photosynthesis. Prevents excessive induction of non-photochemical quenching (NPQ) under continuous-light conditions. Indirectly promotes efficient inorganic carbon uptake into chloroplasts. The protein is Potassium/proton antiporter CemA of Manihot esculenta (Cassava).